The following is a 326-amino-acid chain: Trans-L-3-hydroxyproline dehydratase (326 aa).

Cys-80 serves as the catalytic Proton acceptor. Residues 81 to 82 (GH), Asp-241, and 246 to 247 (GS) contribute to the substrate site.

It belongs to the proline racemase family. As to quaternary structure, homodimer.

The catalysed reaction is trans-3-hydroxy-L-proline = 1-pyrroline-2-carboxylate + H2O. Functionally, catalyzes the dehydration of trans-3-hydroxy-L-proline to delta-1-pyrroline-2-carboxylate (Pyr2C). The polypeptide is Trans-L-3-hydroxyproline dehydratase (l3hypdh) (Saccoglossus kowalevskii (Acorn worm)).